Here is a 103-residue protein sequence, read N- to C-terminus: MNNSEFSKIAETTIAYIAEKIEEQDKEASIDVDLQGDILNLDTDKGVYVINKQSAAKEIWLSSPVSGPYHFCYEQGKWTNRAGLELMAILTEELNIKFDTRPT.

It belongs to the frataxin family.

Its function is as follows. Involved in iron-sulfur (Fe-S) cluster assembly. May act as a regulator of Fe-S biogenesis. The polypeptide is Iron-sulfur cluster assembly protein CyaY (Rickettsia peacockii (strain Rustic)).